A 192-amino-acid polypeptide reads, in one-letter code: Type 1 phosphatases regulator YPI2 (192 aa).

2 disordered regions span residues 1–53 (MLQR…GKHK) and 65–192 (EFGQ…PVQK). A compositionally biased stretch (low complexity) spans 8 to 18 (QTSSSTQTETT). Over residues 25-49 (RRPETRQKEDSKVKWTEDVIDNEHM) the composition is skewed to basic and acidic residues. Residues 69 to 79 (SSDESSDSSSD) are compositionally biased toward low complexity. The segment covering 86–103 (YERNNDFDQNHRHSHNFD) has biased composition (basic and acidic residues). Residues 134–148 (KGNTGMSKPSSSSPD) are compositionally biased toward polar residues. The span at 157–169 (IHKRNKKVRKPKR) shows a compositional bias: basic residues.

It belongs to the YPI1 family.

It localises to the nucleus. Its function is as follows. Regulator of type 1 phosphatases which maintains protein phosphatase activity under strict control. In Scheffersomyces stipitis (strain ATCC 58785 / CBS 6054 / NBRC 10063 / NRRL Y-11545) (Yeast), this protein is Type 1 phosphatases regulator YPI2 (YPI2).